The following is a 229-amino-acid chain: Uracil-DNA glycosylase (229 aa).

Aspartate 67 functions as the Proton acceptor in the catalytic mechanism.

Belongs to the uracil-DNA glycosylase (UDG) superfamily. UNG family.

The protein localises to the cytoplasm. It carries out the reaction Hydrolyzes single-stranded DNA or mismatched double-stranded DNA and polynucleotides, releasing free uracil.. Excises uracil residues from the DNA which can arise as a result of misincorporation of dUMP residues by DNA polymerase or due to deamination of cytosine. This chain is Uracil-DNA glycosylase, found in Coxiella burnetii (strain RSA 493 / Nine Mile phase I).